The sequence spans 275 residues: 3-methyl-2-oxobutanoate hydroxymethyltransferase (275 aa).

Residues aspartate 44 and aspartate 83 each contribute to the Mg(2+) site. Residues 44–45 (DS), aspartate 83, and lysine 113 contribute to the 3-methyl-2-oxobutanoate site. Glutamate 115 is a Mg(2+) binding site. Catalysis depends on glutamate 182, which acts as the Proton acceptor.

The protein belongs to the PanB family. Homodecamer; pentamer of dimers. Requires Mg(2+) as cofactor.

The protein resides in the cytoplasm. It catalyses the reaction 3-methyl-2-oxobutanoate + (6R)-5,10-methylene-5,6,7,8-tetrahydrofolate + H2O = 2-dehydropantoate + (6S)-5,6,7,8-tetrahydrofolate. It functions in the pathway cofactor biosynthesis; (R)-pantothenate biosynthesis; (R)-pantoate from 3-methyl-2-oxobutanoate: step 1/2. Its function is as follows. Catalyzes the reversible reaction in which hydroxymethyl group from 5,10-methylenetetrahydrofolate is transferred onto alpha-ketoisovalerate to form ketopantoate. The sequence is that of 3-methyl-2-oxobutanoate hydroxymethyltransferase from Clostridium beijerinckii (strain ATCC 51743 / NCIMB 8052) (Clostridium acetobutylicum).